The following is a 207-amino-acid chain: ATP synthase subunit b 2 (207 aa).

The segment covering 1–31 (MVAQAAPPAGTAGQGTHEAASAAHGAAAAHG) has biased composition (low complexity). The interval 1–41 (MVAQAAPPAGTAGQGTHEAASAAHGAAAAHGAAEEGHGKKS) is disordered. A helical transmembrane segment spans residues 48–70 (ATTFASQLLWLVLSFGLLYLLMS).

This sequence belongs to the ATPase B chain family. In terms of assembly, F-type ATPases have 2 components, F(1) - the catalytic core - and F(0) - the membrane proton channel. F(1) has five subunits: alpha(3), beta(3), gamma(1), delta(1), epsilon(1). F(0) has three main subunits: a(1), b(2) and c(10-14). The alpha and beta chains form an alternating ring which encloses part of the gamma chain. F(1) is attached to F(0) by a central stalk formed by the gamma and epsilon chains, while a peripheral stalk is formed by the delta and b chains.

The protein resides in the cell inner membrane. F(1)F(0) ATP synthase produces ATP from ADP in the presence of a proton or sodium gradient. F-type ATPases consist of two structural domains, F(1) containing the extramembraneous catalytic core and F(0) containing the membrane proton channel, linked together by a central stalk and a peripheral stalk. During catalysis, ATP synthesis in the catalytic domain of F(1) is coupled via a rotary mechanism of the central stalk subunits to proton translocation. Its function is as follows. Component of the F(0) channel, it forms part of the peripheral stalk, linking F(1) to F(0). This is ATP synthase subunit b 2 from Xanthobacter autotrophicus (strain ATCC BAA-1158 / Py2).